We begin with the raw amino-acid sequence, 148 residues long: Aspartate carbamoyltransferase regulatory chain (148 aa).

C106, C111, C134, and C137 together coordinate Zn(2+).

Belongs to the PyrI family. In terms of assembly, contains catalytic and regulatory chains. Zn(2+) is required as a cofactor.

Functionally, involved in allosteric regulation of aspartate carbamoyltransferase. The polypeptide is Aspartate carbamoyltransferase regulatory chain (Methanococcus vannielii (strain ATCC 35089 / DSM 1224 / JCM 13029 / OCM 148 / SB)).